We begin with the raw amino-acid sequence, 179 residues long: Large ribosomal subunit protein uL5 (179 aa).

The protein belongs to the universal ribosomal protein uL5 family. In terms of assembly, part of the 50S ribosomal subunit; part of the 5S rRNA/L5/L18/L25 subcomplex. Contacts the 5S rRNA and the P site tRNA. Forms a bridge to the 30S subunit in the 70S ribosome.

Functionally, this is one of the proteins that bind and probably mediate the attachment of the 5S RNA into the large ribosomal subunit, where it forms part of the central protuberance. In the 70S ribosome it contacts protein S13 of the 30S subunit (bridge B1b), connecting the 2 subunits; this bridge is implicated in subunit movement. Contacts the P site tRNA; the 5S rRNA and some of its associated proteins might help stabilize positioning of ribosome-bound tRNAs. The chain is Large ribosomal subunit protein uL5 from Haemophilus ducreyi (strain 35000HP / ATCC 700724).